Consider the following 1697-residue polypeptide: Phosphatidylinositol 3-kinase 3 (1697 aa).

6 disordered regions span residues 57–91 (RSIN…TQPC), 169–229 (INNN…DSSI), 244–279 (KTTE…ENEI), 310–376 (KKNN…NSVG), 398–428 (SWTS…SGSS), and 440–504 (DLLK…NNDE). Composition is skewed to low complexity over residues 60 to 87 (NNNN…NNNN), 170 to 196 (NNNN…NNNN), and 212 to 222 (NNNSNNNNNIN). Composition is skewed to low complexity over residues 312-374 (NNNN…TTNS) and 398-408 (SWTSSKPTSSS). 2 stretches are compositionally biased toward polar residues: residues 409-428 (IGFA…SGSS) and 444-456 (SPSS…SDIF). Low complexity predominate over residues 457 to 503 (NENNNNNNNNNNNNNNNNNNNNNNNNNNNNNNNNEELINNNNNNNND). The region spanning 737 to 823 (PEFFVIRVHL…KGEIDLTMVE (87 aa)) is the PI3K-RBD domain. A C2 PI3K-type domain is found at 888–1036 (VTENLQVRLL…QAIIIAFEFK (149 aa)). The PIK helical domain maps to 1060–1238 (GNELPVVTME…RVLSSGFLRY (179 aa)). The 278-residue stretch at 1304–1581 (IPEKCKSMDS…LIHESIGTLT (278 aa)) folds into the PI3K/PI4K catalytic domain. The tract at residues 1310 to 1316 (SMDSAKV) is G-loop. The interval 1447-1455 (GIGDRHNDN) is catalytic loop. The tract at residues 1466–1492 (HIDFGHFLGNFKTFAGFQREKAPFVLT) is activation loop. Residues 1609–1625 (ASSLNLNKNKPSSQSKL) show a composition bias toward low complexity. Positions 1609-1697 (ASSLNLNKNK…DTEKENSIDK (89 aa)) are disordered. Tandem repeats lie at residues 1622-1626 (QSKLD), 1627-1631 (LSRSD), 1632-1636 (LSRSD), 1642-1646 (SSRLD), and 1647-1651 (LSRSD). Residues 1622-1651 (QSKLDLSRSDLSRSDSSRSDSSRLDLSRSD) are 5 X 5 AA approximate repeats. 2 stretches are compositionally biased toward basic and acidic residues: residues 1626–1681 (DLSR…DKDN) and 1688–1697 (DTEKENSIDK). The 7 X 2 AA tandem repeats of K-E stretch occupies residues 1659 to 1672 (KEKEKEKEKEKEKE).

This sequence belongs to the PI3/PI4-kinase family.

It carries out the reaction a 1,2-diacyl-sn-glycero-3-phospho-(1D-myo-inositol) + ATP = a 1,2-diacyl-sn-glycero-3-phospho-(1D-myo-inositol-3-phosphate) + ADP + H(+). This chain is Phosphatidylinositol 3-kinase 3 (pikC), found in Dictyostelium discoideum (Social amoeba).